Reading from the N-terminus, the 104-residue chain is Large ribosomal subunit protein uL24 (104 aa).

Belongs to the universal ribosomal protein uL24 family. In terms of assembly, part of the 50S ribosomal subunit.

One of two assembly initiator proteins, it binds directly to the 5'-end of the 23S rRNA, where it nucleates assembly of the 50S subunit. Its function is as follows. One of the proteins that surrounds the polypeptide exit tunnel on the outside of the subunit. This Methylobacterium radiotolerans (strain ATCC 27329 / DSM 1819 / JCM 2831 / NBRC 15690 / NCIMB 10815 / 0-1) protein is Large ribosomal subunit protein uL24.